The following is a 166-amino-acid chain: Ribosomal RNA large subunit methyltransferase H (166 aa).

Residues leucine 85, glycine 116, and 135–140 (ISKMTF) each bind S-adenosyl-L-methionine.

It belongs to the RNA methyltransferase RlmH family. In terms of assembly, homodimer.

It is found in the cytoplasm. The catalysed reaction is pseudouridine(1915) in 23S rRNA + S-adenosyl-L-methionine = N(3)-methylpseudouridine(1915) in 23S rRNA + S-adenosyl-L-homocysteine + H(+). In terms of biological role, specifically methylates the pseudouridine at position 1915 (m3Psi1915) in 23S rRNA. The sequence is that of Ribosomal RNA large subunit methyltransferase H from Francisella tularensis subsp. holarctica (strain FTNF002-00 / FTA).